A 779-amino-acid chain; its full sequence is MSLPRCTLLWARLPAGRGAGPRAAPCSALRALVGSFPGASGRVPCLAASSSASGGSKAPNTSLFVPLTVKPQGPSADGDVGAELTRPLDKNEVKKILDKFYKRQEIQKLSADYGLDARLFHQAFISFRNYIMQSHSLDVDIHIVLNDICFSAAHVDDLFPFFLRHAKQIFPVLECKDDLRKISDLRIPPNWYPEARARQRKIIFHSGPTNSGKTYHAIQRYLSATSGVYCGPLKLLAHEIFEKSNAAGVPCDLVTGEERLTVEPEGKQATHVSCTVEMCNVATPYEVAVIDEIQMIRDPARGWAWTRALLGLCAEEVHLCGESAAINLVSELLYTTGEEVEVQKYERLTPISVLDHALESLDNLQPGDCIVCFSKNDIYSVSRQIEIRGLESAVIYGSLPPGTKLAQARKFNDPNDPCKILVATDAIGMGLNLSIRRIIFYSLIKPSINEKGEKELEPITTSQALQIAGRAGRFSSHFKEGQVTTMHRDDLALLKDILNRPVDPIQAAGLHPTAEQIEMFAYHLPETTLSNLIDIFVDFAQVDGQYFVCNMDDFKFSAELIQHIPLSLRVRYVFCTAPINKKQPFVCSSLLQFARQYSRNEPLTFAWLRRYIKWPLLPPKNIKDLMDLEAVHDVFDLYLWLSYRFIDMFPDSSLVRSLQKELDAIIQEGVHNITKLIKISESRKLLNLESLPSGDQSRLSGASKSPARRTRGTKSAGNKATEPLSPSDKELPLASRLVQQGLLTADMLRQLQKEWLTQQPEHSREKVGTRRKKKDPDSD.

Residues 1–40 (MSLPRCTLLWARLPAGRGAGPRAAPCSALRALVGSFPGAS) constitute a mitochondrion transit peptide. At lysine 99 the chain carries N6-acetyllysine. The 141-residue stretch at 194 to 334 (EARARQRKII…AINLVSELLY (141 aa)) folds into the Helicase ATP-binding domain. Residue 207 to 214 (GPTNSGKT) coordinates ATP. Positions 353–521 (VLDHALESLD…PTAEQIEMFA (169 aa)) constitute a Helicase C-terminal domain. Residues 650-779 (PDSSLVRSLQ…RRKKKDPDSD (130 aa)) form an interaction with LAMTOR5, important for protein stability region. A compositionally biased stretch (polar residues) spans 693-703 (SGDQSRLSGAS). Disordered stretches follow at residues 693–732 (SGDQ…KELP) and 754–779 (EWLT…PDSD). At serine 725 the chain carries Phosphoserine. A compositionally biased stretch (basic and acidic residues) spans 761–779 (EHSREKVGTRRKKKDPDSD).

Belongs to the helicase family. As to quaternary structure, homodimer; in free form. Component of the mitochondrial degradosome (mtEXO) complex which is a heteropentamer containing 2 copies of SUPV3L1 and 3 copies of PNPT1. As part of mitochondrial degradosome complex, interacts with GRSF1 in a RNA-dependent manner; the interaction enhances the activity of the complex. Interacts with LAMTOR5/HBXIP, WRN and BLM. The cofactor is Mg(2+). Requires Mn(2+) as cofactor.

Its subcellular location is the nucleus. The protein resides in the mitochondrion matrix. The protein localises to the mitochondrion nucleoid. The enzyme catalyses ATP + H2O = ADP + phosphate + H(+). Its activity is regulated as follows. Helicase activity toward DNA substrate is inhibited by micromolar concentrations of 5,6-dichloro-1-(beta-D-ribofuranosyl)benzotriazole (DRBT) and 4,5,6,7-tetrabromobenzotriazole (TBBT). Helicase activity toward RNA substrate is inhibited by elevated concentrations of TBBT. Inhibited by some ring-expanded nucleoside analogs. Functionally, major helicase player in mitochondrial RNA metabolism. Component of the mitochondrial degradosome (mtEXO) complex, that degrades 3' overhang double-stranded RNA with a 3'-to-5' directionality in an ATP-dependent manner. Involved in the degradation of non-coding mitochondrial transcripts (MT-ncRNA) and tRNA-like molecules. ATPase and ATP-dependent multisubstrate helicase, able to unwind double-stranded (ds) DNA and RNA, and RNA/DNA heteroduplexes in the 5'-to-3' direction. Plays a role in the RNA surveillance system in mitochondria; regulates the stability of mature mRNAs, the removal of aberrantly formed mRNAs and the rapid degradation of non coding processing intermediates. Also implicated in recombination and chromatin maintenance pathways. May protect cells from apoptosis. Associates with mitochondrial DNA. The chain is ATP-dependent RNA helicase SUPV3L1, mitochondrial (Supv3l1) from Mus musculus (Mouse).